A 123-amino-acid chain; its full sequence is uncharacterized protein (123 aa).

2 disordered regions span residues 1-21 (MGAP…KLFK) and 82-123 (EKTA…EDES).

This is an uncharacterized protein from Homo sapiens (Human).